Reading from the N-terminus, the 554-residue chain is Glutamine--tRNA ligase (554 aa).

The 'HIGH' region motif lies at 34–44 (PEPNGYLHIGH). ATP is bound by residues 35–37 (EPN) and 41–47 (HIGHAKS). Residues D67 and Y212 each coordinate L-glutamine. ATP-binding positions include T231, 261-262 (RL), and 269-271 (MSK). The 'KMSKS' region signature appears at 268-272 (VMSKR). The segment at 317–324 (TKQDNTIE) is interaction with tRNA.

This sequence belongs to the class-I aminoacyl-tRNA synthetase family. Monomer.

It localises to the cytoplasm. The catalysed reaction is tRNA(Gln) + L-glutamine + ATP = L-glutaminyl-tRNA(Gln) + AMP + diphosphate. In Shigella boydii serotype 18 (strain CDC 3083-94 / BS512), this protein is Glutamine--tRNA ligase.